A 415-amino-acid chain; its full sequence is Putative competence-damage inducible protein (415 aa).

The protein belongs to the CinA family.

The chain is Putative competence-damage inducible protein from Listeria innocua serovar 6a (strain ATCC BAA-680 / CLIP 11262).